We begin with the raw amino-acid sequence, 413 residues long: Multifunctional CCA protein (413 aa).

ATP-binding residues include glycine 8 and arginine 11. CTP contacts are provided by glycine 8 and arginine 11. Positions 21 and 23 each coordinate Mg(2+). ATP-binding residues include arginine 91, arginine 137, and arginine 140. Arginine 91, arginine 137, and arginine 140 together coordinate CTP. In terms of domain architecture, HD spans 228–329; it reads TGVHTLMTLS…VKLFDAIDAW (102 aa).

The protein belongs to the tRNA nucleotidyltransferase/poly(A) polymerase family. Bacterial CCA-adding enzyme type 1 subfamily. As to quaternary structure, monomer. Can also form homodimers and oligomers. The cofactor is Mg(2+). Requires Ni(2+) as cofactor.

The enzyme catalyses a tRNA precursor + 2 CTP + ATP = a tRNA with a 3' CCA end + 3 diphosphate. The catalysed reaction is a tRNA with a 3' CCA end + 2 CTP + ATP = a tRNA with a 3' CCACCA end + 3 diphosphate. Its function is as follows. Catalyzes the addition and repair of the essential 3'-terminal CCA sequence in tRNAs without using a nucleic acid template. Adds these three nucleotides in the order of C, C, and A to the tRNA nucleotide-73, using CTP and ATP as substrates and producing inorganic pyrophosphate. tRNA 3'-terminal CCA addition is required both for tRNA processing and repair. Also involved in tRNA surveillance by mediating tandem CCA addition to generate a CCACCA at the 3' terminus of unstable tRNAs. While stable tRNAs receive only 3'-terminal CCA, unstable tRNAs are marked with CCACCA and rapidly degraded. In Salmonella paratyphi A (strain ATCC 9150 / SARB42), this protein is Multifunctional CCA protein.